Reading from the N-terminus, the 206-residue chain is Thymidylate kinase (206 aa).

An ATP-binding site is contributed by 11–18 (GIDGAGKT).

Belongs to the thymidylate kinase family.

The catalysed reaction is dTMP + ATP = dTDP + ADP. In terms of biological role, phosphorylation of dTMP to form dTDP in both de novo and salvage pathways of dTTP synthesis. The protein is Thymidylate kinase of Burkholderia cenocepacia (strain ATCC BAA-245 / DSM 16553 / LMG 16656 / NCTC 13227 / J2315 / CF5610) (Burkholderia cepacia (strain J2315)).